Here is a 138-residue protein sequence, read N- to C-terminus: Phospholipase A2 homolog crotoxin acid subunit CA (138 aa).

Positions 1–37 (MRALWIVAVLLVGVEGSLVEFETLMMKIAGRSGISYY) are cleaved as a signal peptide. 8 disulfide bridges follow: C42–C131, C44–C60, C59–C111, C65–C138, C66–C104, C73–C97, C91–C102, and C131–C138. Positions 79 to 82 (VYTY) are excised as a propeptide. Position 84 is a pyrrolidone carboxylic acid (Q84). A propeptide spanning residues 119 to 124 (YDYKYL) is cleaved from the precursor. The residue at position 125 (Q125) is a Pyrrolidone carboxylic acid.

The protein belongs to the phospholipase A2 family. Group II subfamily. D49 sub-subfamily. Heterodimer of one of the acidic (CA1, CA2, CA3 or CA4) and one of the basic (CBa1, CBa2, CBb, CBc or CBd) subunits; non-covalently linked. The acidic subunit is non-toxic, without enzymatic activity and comprises 3 peptides that are cross-linked by 5 disulfide bridges. The basic subunit is toxic, has phospholipase A2 activity and is composed of a single chain. Multiple variants of each subunit give different crotoxin complexes that can be subdivided into 2 classes: (1) those of high toxicity, low PLA2 activity (CBb, CBc and CBd linked with high affinity to any CA) and high stability (K(d)=4.5 nM) and (2) those of moderate toxicity, high PLA2 activity (CBa2 linked with low affinity to any CA) and low stability (K(d)=25 nM). As to expression, expressed by the venom gland.

Its subcellular location is the secreted. Functionally, CAalpha-CAbeta-CAgamma: The acidic subunit of crotoxin (CA) is a heterotrimer of three disulfide-linked chains generated by post-translational maturation of a PLA2-like precursor. CA has no PLA2 activity and is not neurotoxic by itself, but plays several important functions in the crotoxin complex by increasing the lethal potency of the uncomplexed CB subunit. It acts by physically occluding the hydrophobic interfacial binding surface (IBS) of CB. This effect decreases the adsorption of CB to phospholipid membranes, targeting the crotoxin complex to reach the specific presynaptic receptor (R48) at the neuromuscular junction. It also prevents the formation of the reactive CB dimer. Moreover, the CA subunit inhibits the catalytic activity by partially masking the catalytic site of CB and inhibits its anticoagulant activity. Heterodimer CA-CB: Crotoxin is a potent presynaptic neurotoxin that possesses phospholipase A2 (PLA2) activity and exerts a lethal action by blocking neuromuscular transmission. It consists of a non-covalent association of a basic and weakly toxic PLA2 subunit (CBa2, CBb, CBc, or CBd), with a small acidic, non-enzymatic and non-toxic subunit (CA1, CA2, CA3 or CA4). The complex acts by binding to a specific 48-kDa protein (R48/CAPT) receptor located on presynaptic membranes, forming a transient ternary complex CA-CB-R48, followed by dissociation of the CA-CB complex and release of the CA subunit. At equilibrium, only the CB subunits remain associated with the specific crotoxin receptor. In addition to neurotoxicity, crotoxin has been found to exert myotoxicity, nephrotoxicity, and cardiovascular toxicity. Moreover, anti-inflammatory, immunomodulatory, anti-tumor and analgesic effects of crotoxin have also been reported. Its function is as follows. Found in the venom as a monomer and stabilized by one disulfide bond (Cys-131 and Cys-138). This peptide induces potent antinociceptive effects in acute and chronic pain models. This effect is mediated by the release of peripheral dynorphin A, an endogenous agonist of kappa-opioid receptors, and this release is dependent on cannabinoid receptor CB2 activation. The sequence is that of Phospholipase A2 homolog crotoxin acid subunit CA from Crotalus durissus terrificus (South American rattlesnake).